The chain runs to 117 residues: Immunoglobulin heavy variable 1-46 (117 aa).

Residues 1-19 (MDWTWRVFCLLAVAPGAHS) form the signal peptide. Residues 20-44 (QVQLVQSGAEVKKPGASVKVSCKAS) are framework-1. In terms of domain architecture, Ig-like spans 20 to 117 (QVQLVQSGAE…EDTAVYYCAR (98 aa)). A disulfide bond links C41 and C115. Residues 45–52 (GYTFTSYY) are complementarity-determining-1. Residues 53 to 69 (MHWVRQAPGQGLEWMGI) are framework-2. A complementarity-determining-2 region spans residues 70-77 (INPSGGST). The framework-3 stretch occupies residues 78–115 (SYAQKFQGRVTMTRDTSTSTVYMELSSLRSEDTAVYYC). The interval 116-117 (AR) is complementarity-determining-3.

As to quaternary structure, immunoglobulins are composed of two identical heavy chains and two identical light chains; disulfide-linked.

It is found in the secreted. It localises to the cell membrane. In terms of biological role, v region of the variable domain of immunoglobulin heavy chains that participates in the antigen recognition. Immunoglobulins, also known as antibodies, are membrane-bound or secreted glycoproteins produced by B lymphocytes. In the recognition phase of humoral immunity, the membrane-bound immunoglobulins serve as receptors which, upon binding of a specific antigen, trigger the clonal expansion and differentiation of B lymphocytes into immunoglobulins-secreting plasma cells. Secreted immunoglobulins mediate the effector phase of humoral immunity, which results in the elimination of bound antigens. The antigen binding site is formed by the variable domain of one heavy chain, together with that of its associated light chain. Thus, each immunoglobulin has two antigen binding sites with remarkable affinity for a particular antigen. The variable domains are assembled by a process called V-(D)-J rearrangement and can then be subjected to somatic hypermutations which, after exposure to antigen and selection, allow affinity maturation for a particular antigen. This Homo sapiens (Human) protein is Immunoglobulin heavy variable 1-46.